The primary structure comprises 134 residues: RuBisCO chaperone RbcX (134 aa).

The disordered stretch occupies residues 97 to 134 (SNGNHRRSLLERLTQVDSSSTDQTEPNPGESDTSEDSE). The segment covering 111 to 122 (QVDSSSTDQTEP) has biased composition (polar residues).

The protein belongs to the RbcX family. As to quaternary structure, homodimer (RbcX2). Interacts with the exposed C-terminal peptide of RbcL ('Glu-459-Asp-468'); binds 2 RbcL peptides per RbcX2, stapling them into an RbcL2 dimer. A slightly longer peptide binds with a higher affinity, but no long-term stable interaction with RbcL is detected. Contacts a second RbcL monomer via its peripheral polar surface.

Its subcellular location is the carboxysome. The protein localises to the cytoplasm. An RbcL-specific chaperone. Required for assembly of the RbcL8 core, acting downstream of the major chaperonin (GroEL-GroES). Acts on newly folded RbcL, has a transient dynamic interaction with RbcL and is eventually displaced by RbcS. The central cleft of the RbcX homodimer (RbcX2) binds the C-terminus of an RbcL monomer, stabilizing the C-terminus and probably preventing its reassociation with chaperonin GroEL-ES. At the same time the peripheral region of RbcX2 binds a second RbcL monomer, bridging the RbcL homodimers in the correct orientation. The RbcX2(2)-bound RbcL dimers then assemble into the RbcL8 core (RbcL8-(RbcX2)8). RbcS binding triggers the release of RbcX2. Required for optimal reconstitution of RuBisCO into its RbcL8S8 holoenzyme form upon expression of rbcL-rbcS subunits in E.coli, and probably also in situ. A frameshift mutation that replaces half the protein reduces accumulation of both RbcL and RbcS subunits and halves activity of RuBisCO in situ and in E.coli. The polypeptide is RuBisCO chaperone RbcX (Picosynechococcus sp. (strain ATCC 27264 / PCC 7002 / PR-6) (Agmenellum quadruplicatum)).